A 443-amino-acid chain; its full sequence is Probable D-serine dehydratase (443 aa).

Residue Lys116 is modified to N6-(pyridoxal phosphate)lysine.

Belongs to the serine/threonine dehydratase family. DsdA subfamily. Pyridoxal 5'-phosphate is required as a cofactor.

It catalyses the reaction D-serine = pyruvate + NH4(+). This is Probable D-serine dehydratase from Bacillus cereus (strain G9842).